The following is a 132-amino-acid chain: Small ribosomal subunit protein uS8 (132 aa).

This sequence belongs to the universal ribosomal protein uS8 family. Part of the 30S ribosomal subunit. Contacts proteins S5 and S12.

In terms of biological role, one of the primary rRNA binding proteins, it binds directly to 16S rRNA central domain where it helps coordinate assembly of the platform of the 30S subunit. The protein is Small ribosomal subunit protein uS8 of Bradyrhizobium sp. (strain BTAi1 / ATCC BAA-1182).